The primary structure comprises 247 residues: Cytochrome c oxidase subunit 2 (247 aa).

Over 12 to 38 (DVPTPWGLYFQDSSTPNQEGIIELHDN) the chain is Mitochondrial intermembrane. The chain crosses the membrane as a helical span at residues 39-59 (IMFYLVLILCTVSWLLFSIVK). Residues 60-78 (DSSKNPLPHKYLVHGQTIE) are Mitochondrial matrix-facing. The chain crosses the membrane as a helical span at residues 79 to 101 (IIWTILPAVVLLIIAFPSFILLY). The Mitochondrial intermembrane segment spans residues 102 to 247 (LCDEVISPAM…KEFLTWLNEQ (146 aa)). Positions 182, 217, 219, 221, 225, and 228 each coordinate Cu cation. Glutamate 219 contacts Mg(2+).

The protein belongs to the cytochrome c oxidase subunit 2 family. As to quaternary structure, component of the cytochrome c oxidase (complex IV, CIV), a multisubunit enzyme composed of a catalytic core of 3 subunits and several supernumerary subunits. The complex exists as a monomer or a dimer and forms supercomplexes (SCs) in the inner mitochondrial membrane with ubiquinol-cytochrome c oxidoreductase (cytochrome b-c1 complex, complex III, CIII). Cu cation serves as cofactor. The signal sequence of COX2 is processed by IMP1.

The protein localises to the mitochondrion inner membrane. It catalyses the reaction 4 Fe(II)-[cytochrome c] + O2 + 8 H(+)(in) = 4 Fe(III)-[cytochrome c] + 2 H2O + 4 H(+)(out). Its function is as follows. Component of the cytochrome c oxidase, the last enzyme in the mitochondrial electron transport chain which drives oxidative phosphorylation. The respiratory chain contains 3 multisubunit complexes succinate dehydrogenase (complex II, CII), ubiquinol-cytochrome c oxidoreductase (cytochrome b-c1 complex, complex III, CIII) and cytochrome c oxidase (complex IV, CIV), that cooperate to transfer electrons derived from NADH and succinate to molecular oxygen, creating an electrochemical gradient over the inner membrane that drives transmembrane transport and the ATP synthase. Cytochrome c oxidase is the component of the respiratory chain that catalyzes the reduction of oxygen to water. Electrons originating from reduced cytochrome c in the intermembrane space (IMS) are transferred via the dinuclear copper A center (CU(A)) of subunit 2 and heme A of subunit 1 to the active site in subunit 1, a binuclear center (BNC) formed by heme A3 and copper B (CU(B)). The BNC reduces molecular oxygen to 2 water molecules using 4 electrons from cytochrome c in the IMS and 4 protons from the mitochondrial matrix. In Cyberlindnera mrakii (Yeast), this protein is Cytochrome c oxidase subunit 2 (COX2).